The primary structure comprises 163 residues: Cyclic pyranopterin monophosphate synthase (163 aa).

Substrate-binding positions include 76 to 78 (LCH) and 114 to 115 (ME). Asp-129 is an active-site residue.

This sequence belongs to the MoaC family. As to quaternary structure, homohexamer; trimer of dimers.

It catalyses the reaction (8S)-3',8-cyclo-7,8-dihydroguanosine 5'-triphosphate = cyclic pyranopterin phosphate + diphosphate. It participates in cofactor biosynthesis; molybdopterin biosynthesis. In terms of biological role, catalyzes the conversion of (8S)-3',8-cyclo-7,8-dihydroguanosine 5'-triphosphate to cyclic pyranopterin monophosphate (cPMP). The polypeptide is Cyclic pyranopterin monophosphate synthase (Desulfovibrio desulfuricans (strain ATCC 27774 / DSM 6949 / MB)).